A 314-amino-acid chain; its full sequence is tRNA dimethylallyltransferase 1 (314 aa).

Gly-17 to Thr-24 contacts ATP. Thr-19–Thr-24 is a binding site for substrate. The interval Asp-42 to Gln-45 is interaction with substrate tRNA.

It belongs to the IPP transferase family. In terms of assembly, monomer. Mg(2+) is required as a cofactor.

The enzyme catalyses adenosine(37) in tRNA + dimethylallyl diphosphate = N(6)-dimethylallyladenosine(37) in tRNA + diphosphate. In terms of biological role, catalyzes the transfer of a dimethylallyl group onto the adenine at position 37 in tRNAs that read codons beginning with uridine, leading to the formation of N6-(dimethylallyl)adenosine (i(6)A). This Syntrophotalea carbinolica (strain DSM 2380 / NBRC 103641 / GraBd1) (Pelobacter carbinolicus) protein is tRNA dimethylallyltransferase 1.